The primary structure comprises 308 residues: MQQSHIPVMLNEMLANLAPQDGKSYLDCTFGAGGYSKAILESCNCYVTALDRDPNVIKRAERIKQNYSTRFDFIETNFADSFAKLKEKKFDGIVLDLGVSSMQLDIADRGFSFLHDSPLDMRMSGQGLSAEEFINTVEEKELADIIYKYGDESFSRRIAKRIVEYRKTARINSTGKLAEIVRNSIGFRKGKIDPATKTFQAIRIYINDELRELERFLANVQNILNKDGRLVIVSFHSLEDRIVKHFFKENSEKPVARSKYSKDNPVIDPNKWLKIITNKAEAPSDKEVELNVRARSAKLRAAKAIYEY.

Residues glycine 33 to tyrosine 35, aspartate 51, phenylalanine 82, aspartate 96, and glutamine 103 contribute to the S-adenosyl-L-methionine site.

It belongs to the methyltransferase superfamily. RsmH family.

The protein resides in the cytoplasm. The enzyme catalyses cytidine(1402) in 16S rRNA + S-adenosyl-L-methionine = N(4)-methylcytidine(1402) in 16S rRNA + S-adenosyl-L-homocysteine + H(+). Specifically methylates the N4 position of cytidine in position 1402 (C1402) of 16S rRNA. The protein is Ribosomal RNA small subunit methyltransferase H of Rickettsia canadensis (strain McKiel).